The chain runs to 108 residues: Nucleoid-associated protein mma_2329 (108 aa).

It belongs to the YbaB/EbfC family. In terms of assembly, homodimer.

Its subcellular location is the cytoplasm. The protein localises to the nucleoid. Its function is as follows. Binds to DNA and alters its conformation. May be involved in regulation of gene expression, nucleoid organization and DNA protection. The chain is Nucleoid-associated protein mma_2329 from Janthinobacterium sp. (strain Marseille) (Minibacterium massiliensis).